A 324-amino-acid chain; its full sequence is Ribosomal RNA small subunit methyltransferase H (324 aa).

Residues Gly35–His37, Asp55, Phe85, Asp103, and Gln110 contribute to the S-adenosyl-L-methionine site.

Belongs to the methyltransferase superfamily. RsmH family.

It is found in the cytoplasm. The enzyme catalyses cytidine(1402) in 16S rRNA + S-adenosyl-L-methionine = N(4)-methylcytidine(1402) in 16S rRNA + S-adenosyl-L-homocysteine + H(+). Specifically methylates the N4 position of cytidine in position 1402 (C1402) of 16S rRNA. In Solidesulfovibrio magneticus (strain ATCC 700980 / DSM 13731 / RS-1) (Desulfovibrio magneticus), this protein is Ribosomal RNA small subunit methyltransferase H.